A 233-amino-acid chain; its full sequence is Large ribosomal subunit protein uL1 (233 aa).

The protein belongs to the universal ribosomal protein uL1 family. Part of the 50S ribosomal subunit.

Functionally, binds directly to 23S rRNA. The L1 stalk is quite mobile in the ribosome, and is involved in E site tRNA release. In terms of biological role, protein L1 is also a translational repressor protein, it controls the translation of the L11 operon by binding to its mRNA. The sequence is that of Large ribosomal subunit protein uL1 from Shewanella piezotolerans (strain WP3 / JCM 13877).